Consider the following 1046-residue polypeptide: Toluene efflux pump membrane transporter TtgE (1046 aa).

12 helical membrane passes run 10-30, 339-359, 370-390, 392-412, 440-460, 470-490, 542-562, 871-891, 895-915, 927-947, 973-993, and 1008-1028; these read IFAW…LTKM, SVVH…FLFL, LAVP…GISI, VLTM…AIVV, GALV…AFFG, FAVT…IFTP, LIFA…PKAF, APML…ALYE, VPMS…LATL, VGLM…IEFA, IIMT…ATGA, and GMIT…VVVV.

Belongs to the resistance-nodulation-cell division (RND) (TC 2.A.6) family.

It is found in the cell inner membrane. In terms of biological role, the inner membrane transporter component of an inducible organic solvent efflux pump. Involved in export of toluene and styrene but not of m-xylene, propylbenzene or ethylbenzene. Is not involved in antibiotic or AMP efflux. In Pseudomonas putida (strain DOT-T1E), this protein is Toluene efflux pump membrane transporter TtgE (ttgE).